A 376-amino-acid polypeptide reads, in one-letter code: Chaperone protein DnaJ (376 aa).

The J domain occupies 5-70 (DYYEILGVER…QKRAAYDKFG (66 aa)). The CR-type zinc finger occupies 131-209 (GVSKEIKVPT…CHGDGRVQKT (79 aa)). Residues C144, C147, C161, C164, C183, C186, C197, and C200 each coordinate Zn(2+). CXXCXGXG motif repeat units lie at residues 144 to 151 (CDECHGSG), 161 to 168 (CPTCHGSG), 183 to 190 (CPHCHGKG), and 197 to 204 (CRKCHGDG).

Belongs to the DnaJ family. As to quaternary structure, homodimer. Zn(2+) serves as cofactor.

The protein localises to the cytoplasm. Functionally, participates actively in the response to hyperosmotic and heat shock by preventing the aggregation of stress-denatured proteins and by disaggregating proteins, also in an autonomous, DnaK-independent fashion. Unfolded proteins bind initially to DnaJ; upon interaction with the DnaJ-bound protein, DnaK hydrolyzes its bound ATP, resulting in the formation of a stable complex. GrpE releases ADP from DnaK; ATP binding to DnaK triggers the release of the substrate protein, thus completing the reaction cycle. Several rounds of ATP-dependent interactions between DnaJ, DnaK and GrpE are required for fully efficient folding. Also involved, together with DnaK and GrpE, in the DNA replication of plasmids through activation of initiation proteins. The polypeptide is Chaperone protein DnaJ (Tolumonas auensis (strain DSM 9187 / NBRC 110442 / TA 4)).